Reading from the N-terminus, the 157-residue chain is Pyruvoyl-dependent arginine decarboxylase (157 aa).

Pyruvic acid (Ser) is present on Ser-44.

It belongs to the PdaD family. The cofactor is pyruvate.

The enzyme catalyses L-arginine + H(+) = agmatine + CO2. The sequence is that of Pyruvoyl-dependent arginine decarboxylase from Thermococcus kodakarensis (strain ATCC BAA-918 / JCM 12380 / KOD1) (Pyrococcus kodakaraensis (strain KOD1)).